The sequence spans 706 residues: Envelope glycoprotein H (706 aa).

The first 18 residues, 1-18, serve as a signal peptide directing secretion; that stretch reads MQLLCVFCLVLLWEVGAA. Residues 19–682 are Virion surface-facing; it reads SLSEVKLHLD…LYEERAHVVL (664 aa). A glycan (N-linked (GlcNAc...) asparagine; by host) is linked at Asn60. The tract at residues 165–229 is interaction with gL; that stretch reads DKFQYTGAMT…QSGDYSLVIV (65 aa). Cys278 and Cys335 are oxidised to a cystine. Residue Asn435 is glycosylated (N-linked (GlcNAc...) asparagine; by host). 2 cysteine pairs are disulfide-bonded: Cys454–Cys478 and Cys534–Cys587. N-linked (GlcNAc...) asparagine; by host glycans are attached at residues Asn549 and Asn604. An intrachain disulfide couples Cys612 to Cys615. N-linked (GlcNAc...) asparagine; by host glycosylation occurs at Asn664. Residues 683 to 703 traverse the membrane as a helical segment; sequence AIILYFIAFALGIFLVHKIVM. Residues 704–706 are Intravirion-facing; the sequence is FFL.

This sequence belongs to the herpesviridae glycoprotein H family. As to quaternary structure, interacts with glycoprotein L (gL); this interaction is necessary for the correct processing and cell surface expression of gH. The heterodimer gH/gL seems to interact with gB trimers during fusion. The heterodimer gH/gL interacts with host EPHA2 to facilitate virus internalization and fusion. Interacts with glycoprotein 42/BZLF2. N-glycosylated, O-glycosylated, and sialylated.

It localises to the virion membrane. Its subcellular location is the host cell membrane. The protein localises to the host endosome membrane. Its function is as follows. The heterodimer glycoprotein H-glycoprotein L is required for the fusion of viral and plasma membranes leading to virus entry into the host cell. Following initial binding to host receptor, membrane fusion is mediated by the fusion machinery composed of gB and the heterodimer gH/gL. May also be involved in the fusion between the virion envelope and the outer nuclear membrane during virion morphogenesis. The heterodimer gH/gL targets also host EPHA2 to promote viral entry. This chain is Envelope glycoprotein H, found in Homo sapiens (Human).